The primary structure comprises 66 residues: UPF0434 protein Nwi_0075 (66 aa).

It belongs to the UPF0434 family.

This is UPF0434 protein Nwi_0075 from Nitrobacter winogradskyi (strain ATCC 25391 / DSM 10237 / CIP 104748 / NCIMB 11846 / Nb-255).